Consider the following 343-residue polypeptide: GTP 3',8-cyclase (343 aa).

The region spanning 19 to 244 is the Radical SAM core domain; the sequence is PYGRTISYLR…TDVDDSTGGP (226 aa). Arginine 28 contributes to the GTP binding site. The [4Fe-4S] cluster site is built by cysteine 35 and cysteine 39. Tyrosine 41 is an S-adenosyl-L-methionine binding site. Cysteine 42 is a [4Fe-4S] cluster binding site. Arginine 77 serves as a coordination point for GTP. S-adenosyl-L-methionine is bound at residue glycine 81. Threonine 111 contacts GTP. S-adenosyl-L-methionine is bound at residue serine 135. Position 171 (lysine 171) interacts with GTP. Methionine 205 lines the S-adenosyl-L-methionine pocket. Residues cysteine 268 and cysteine 271 each coordinate [4Fe-4S] cluster. A GTP-binding site is contributed by 273–275; sequence RVR. Residue cysteine 285 participates in [4Fe-4S] cluster binding.

It belongs to the radical SAM superfamily. MoaA family. In terms of assembly, monomer and homodimer. [4Fe-4S] cluster serves as cofactor.

It catalyses the reaction GTP + AH2 + S-adenosyl-L-methionine = (8S)-3',8-cyclo-7,8-dihydroguanosine 5'-triphosphate + 5'-deoxyadenosine + L-methionine + A + H(+). Its pathway is cofactor biosynthesis; molybdopterin biosynthesis. Functionally, catalyzes the cyclization of GTP to (8S)-3',8-cyclo-7,8-dihydroguanosine 5'-triphosphate. The protein is GTP 3',8-cyclase of Nitrobacter hamburgensis (strain DSM 10229 / NCIMB 13809 / X14).